The following is a 279-amino-acid chain: Malonyl-[acyl-carrier protein] O-methyltransferase (279 aa).

Belongs to the methyltransferase superfamily.

The catalysed reaction is malonyl-[ACP] + S-adenosyl-L-methionine = malonyl-[ACP] methyl ester + S-adenosyl-L-homocysteine. The protein operates within cofactor biosynthesis; biotin biosynthesis. In terms of biological role, converts the free carboxyl group of a malonyl-thioester to its methyl ester by transfer of a methyl group from S-adenosyl-L-methionine (SAM). It allows to synthesize pimeloyl-ACP via the fatty acid synthetic pathway. This is Malonyl-[acyl-carrier protein] O-methyltransferase from Hahella chejuensis (strain KCTC 2396).